The sequence spans 182 residues: MPTPRKIETVSTLTEKLNRAQLVVVADYRGDGKGMSVADMTELRRKLREHGGEVVVAKNTLLKIAAHNTGHEALDPLLAGPTAVTLGYDDVSKVAKALLDYLKSGNKSFTVRGALLGNTLLPADALEQVTKLPSREQALAQVVGGIAAPVSGVVGVLNAAISNVLYVLQARIDQLQPQGETA.

This sequence belongs to the universal ribosomal protein uL10 family. Part of the ribosomal stalk of the 50S ribosomal subunit. The N-terminus interacts with L11 and the large rRNA to form the base of the stalk. The C-terminus forms an elongated spine to which L12 dimers bind in a sequential fashion forming a multimeric L10(L12)X complex.

Its function is as follows. Forms part of the ribosomal stalk, playing a central role in the interaction of the ribosome with GTP-bound translation factors. The sequence is that of Large ribosomal subunit protein uL10 from Chloroflexus aurantiacus (strain ATCC 29364 / DSM 637 / Y-400-fl).